Reading from the N-terminus, the 465-residue chain is uncharacterized protein (465 aa).

Residues 1–15 (MEKNYIFENSIYKDE) show a composition bias toward basic and acidic residues. Disordered stretches follow at residues 1 to 31 (MEKN…NNSS) and 288 to 320 (QLEK…EQLP).

This is an uncharacterized protein from Dictyostelium discoideum (Social amoeba).